Consider the following 614-residue polypeptide: Deoxynucleoside triphosphate triphosphohydrolase SAMHD1 (614 aa).

Low complexity predominate over residues 1–13 (MGSPAAGWGAAPA). The tract at residues 1 to 33 (MGSPAAGWGAAPAKRARREGSAESSCGSPADRD) is disordered. The SAM domain maps to 37 to 102 (WDTERLCQHL…LACLNQLRQT (66 aa)). Positions 107 and 108 each coordinate GTP. N110 serves as a coordination point for dGTP. GTP-binding residues include D128, Q133, and R136. Positions 140, 141, 147, and 155 each coordinate dGTP. DATP is bound at residue Q140. Q140 is a dCTP binding site. Residue Q140 participates in dTTP binding. R155 lines the dATP pocket. DCTP is bound at residue R155. R155 lines the dTTP pocket. In terms of domain architecture, HD spans 155-307 (RFEHSLGVGY…GIDVDKWDYF (153 aa)). Residues H158, H197, and D198 each coordinate Mn(2+). DATP contacts are provided by H201 and H206. DCTP contacts are provided by H201 and H206. The dTTP site is built by H201 and H206. The active site involves H224. Residue D302 coordinates Mn(2+). DGTP contacts are provided by K303, Y306, D310, R324, R343, K345, N349, R357, Y365, Q366, H367, and K368. DATP contacts are provided by K303, Y306, and D310. Residues K303, Y306, and D310 each contribute to the dCTP site. Residues K303, Y306, and D310 each contribute to the dTTP site. R357 lines the dATP pocket. R357 lines the dCTP pocket. Q366 is a dATP binding site. A dCTP-binding site is contributed by Q366. Position 366 (Q366) interacts with dTTP. 3 residues coordinate GTP: R442, K446, and K515. DGTP is bound at residue K515.

The protein belongs to the SAMHD1 family. Homodimer; in absence of GTP and dNTP. Homotetramer; in GTP- and dNTP-bound form. Interacts with rbbp8/CtIP. It depends on Zn(2+) as a cofactor.

The protein resides in the nucleus. It localises to the chromosome. The catalysed reaction is a 2'-deoxyribonucleoside 5'-triphosphate + H2O = a 2'-deoxyribonucleoside + triphosphate + H(+). It carries out the reaction dATP + H2O = 2'-deoxyadenosine + triphosphate + H(+). It catalyses the reaction dCTP + H2O = 2'-deoxycytidine + triphosphate + H(+). The enzyme catalyses dGTP + H2O = 2'-deoxyguanosine + triphosphate + H(+). The catalysed reaction is dTTP + H2O = thymidine + triphosphate + H(+). With respect to regulation, allosterically activated and regulated via the combined actions of GTP and dNTPs (dATP, dGTP, dTTP and dCTP): Allosteric site 1 binds GTP, while allosteric site 2 binds dNTP. Allosteric activation promotes the formation of highly active homotetramers. Functionally, protein that acts both as a host restriction factor involved in defense response to virus and as a regulator of DNA end resection at stalled replication forks. Has deoxynucleoside triphosphate (dNTPase) activity, which is required to restrict infection by viruses: dNTPase activity reduces cellular dNTP levels to levels too low for retroviral reverse transcription to occur, blocking early-stage virus replication in dendritic and other myeloid cells. Functions during S phase at stalled DNA replication forks to promote the resection of gapped or reversed forks: acts by stimulating the exonuclease activity of MRE11, activating the ATR-CHK1 pathway and allowing the forks to restart replication. Its ability to promote degradation of nascent DNA at stalled replication forks is required to prevent induction of type I interferons, thereby preventing chronic inflammation. Ability to promote DNA end resection at stalled replication forks is independent of dNTPase activity. The protein is Deoxynucleoside triphosphate triphosphohydrolase SAMHD1 of Gallus gallus (Chicken).